Reading from the N-terminus, the 596-residue chain is Chaperone protein DnaK (596 aa).

Phosphothreonine; by autocatalysis is present on threonine 180.

This sequence belongs to the heat shock protein 70 family.

Functionally, acts as a chaperone. This is Chaperone protein DnaK from Thermosipho melanesiensis (strain DSM 12029 / CIP 104789 / BI429).